Here is a 238-residue protein sequence, read N- to C-terminus: Adenylate dimethylallyltransferase (238 aa).

This sequence belongs to the isopentenyl transferase family.

The enzyme catalyses dimethylallyl diphosphate + AMP = N(6)-(dimethylallyl)adenosine 5'-phosphate + diphosphate. Its function is as follows. Transfers dimethylallyl groups to AMP as part of the biosynthesis of cytokinin phytohormones. In Ralstonia nicotianae (strain ATCC BAA-1114 / GMI1000) (Ralstonia solanacearum), this protein is Adenylate dimethylallyltransferase (tzs).